Reading from the N-terminus, the 261-residue chain is Indole-3-glycerol phosphate synthase (261 aa).

This sequence belongs to the TrpC family.

The enzyme catalyses 1-(2-carboxyphenylamino)-1-deoxy-D-ribulose 5-phosphate + H(+) = (1S,2R)-1-C-(indol-3-yl)glycerol 3-phosphate + CO2 + H2O. Its pathway is amino-acid biosynthesis; L-tryptophan biosynthesis; L-tryptophan from chorismate: step 4/5. This is Indole-3-glycerol phosphate synthase from Alkaliphilus metalliredigens (strain QYMF).